We begin with the raw amino-acid sequence, 179 residues long: Small heat shock protein hspK (179 aa).

Residues 32-178 (HRINIWRPTV…DRLKIPIQSK (147 aa)) form the sHSP domain. A disordered region spans residues 80–122 (KKSKGGLNNLPSSSSSINSDSTTNTNTNTTTTTTTAPPPPSDA). Residues 87 to 114 (NNLPSSSSSINSDSTTNTNTNTTTTTTT) are compositionally biased toward low complexity.

Belongs to the small heat shock protein (HSP20) family.

This Dictyostelium discoideum (Social amoeba) protein is Small heat shock protein hspK (hspK).